A 307-amino-acid polypeptide reads, in one-letter code: Dihydroorotate dehydrogenase B (NAD(+)), catalytic subunit (307 aa).

FMN is bound by residues Ser22 and 46-47 (KT). Residues Lys46, 70–74 (NAVGL), and Asn128 contribute to the substrate site. Asn128 is an FMN binding site. Cys131 functions as the Nucleophile in the catalytic mechanism. Positions 166 and 192 each coordinate FMN. 193 to 194 (NT) is a binding site for substrate. FMN is bound by residues Gly218, 244–245 (GG), and 266–267 (GT).

Belongs to the dihydroorotate dehydrogenase family. Type 1 subfamily. Heterotetramer of 2 PyrK and 2 PyrD type B subunits. FMN serves as cofactor.

It localises to the cytoplasm. It carries out the reaction (S)-dihydroorotate + NAD(+) = orotate + NADH + H(+). It functions in the pathway pyrimidine metabolism; UMP biosynthesis via de novo pathway; orotate from (S)-dihydroorotate (NAD(+) route): step 1/1. Its function is as follows. Catalyzes the conversion of dihydroorotate to orotate with NAD(+) as electron acceptor. The polypeptide is Dihydroorotate dehydrogenase B (NAD(+)), catalytic subunit (pyrD) (Desulforudis audaxviator (strain MP104C)).